Here is a 165-residue protein sequence, read N- to C-terminus: Cyclic pyranopterin monophosphate synthase (165 aa).

Substrate contacts are provided by residues 83–85 and 120–121; these read FCH and ME. Asp135 is an active-site residue.

The protein belongs to the MoaC family. As to quaternary structure, homohexamer; trimer of dimers.

It catalyses the reaction (8S)-3',8-cyclo-7,8-dihydroguanosine 5'-triphosphate = cyclic pyranopterin phosphate + diphosphate. It participates in cofactor biosynthesis; molybdopterin biosynthesis. Functionally, catalyzes the conversion of (8S)-3',8-cyclo-7,8-dihydroguanosine 5'-triphosphate to cyclic pyranopterin monophosphate (cPMP). The polypeptide is Cyclic pyranopterin monophosphate synthase (Xanthomonas axonopodis pv. citri (strain 306)).